The sequence spans 96 residues: Large ribosomal subunit protein bL25 (96 aa).

It belongs to the bacterial ribosomal protein bL25 family. Part of the 50S ribosomal subunit; part of the 5S rRNA/L5/L18/L25 subcomplex. Contacts the 5S rRNA. Binds to the 5S rRNA independently of L5 and L18.

In terms of biological role, this is one of the proteins that binds to the 5S RNA in the ribosome where it forms part of the central protuberance. In Francisella tularensis subsp. tularensis (strain FSC 198), this protein is Large ribosomal subunit protein bL25.